The following is a 1696-amino-acid chain: PH domain leucine-rich repeat protein phosphatase 1 (1696 aa).

At Met1 the chain carries N-acetylmethionine. 2 disordered regions span residues 1–97 and 222–398; these read MEPA…GGGA and LGHG…VVGE. Low complexity predominate over residues 79–92; sequence VPQPAAGGAAPVTA. The span at 313 to 325 shows a compositional bias: polar residues; sequence DTESFSLSPSAES. Ser378 is modified (phosphoserine). The region spanning 499-599 is the PH domain; sequence RIQLSGMYNV…WLRQVSKVAS (101 aa). 18 LRR repeats span residues 601–622, 624–645, 655–676, 678–699, 701–722, 724–746, 836–857, 858–879, 881–902, 904–925, 926–947, 950–971, 976–996, 1000–1021, 1024–1045, 1047–1068, 1069–1090, and 1092–1113; these read RISS…LFYS, DLTH…PAAR, KLKS…VCSI, TLAE…VGAM, NLQT…LENM, QLSY…EKLT, FLKA…PVPN, YLSY…VCES, KLEV…LFCN, SLRK…LERT, SVEV…LLMK, SLRF…TLSE, ILQE…PLLT, RLKI…KMAK, ELEE…IMNC, RMHT…MQLP, EVKC…ENLP, and KLQE…SLEL. The region spanning 1138 to 1385 is the PPM-type phosphatase domain; the sequence is SHGYTEASGV…DSISAVVVQL (248 aa). 4 residues coordinate Mn(2+): Asp1173, Gly1174, Lys1337, and Asp1376. Disordered stretches follow at residues 1422–1473 and 1610–1696; these read RPSD…SPAY and KPGG…DTPL. 3 stretches are compositionally biased toward low complexity: residues 1431 to 1452, 1647 to 1660, and 1670 to 1680; these read SSSS…MSSE, QQQQ…QQQQ, and QAQAQAQAQAQ. The PDZ-binding motif lies at 1694-1696; that stretch reads TPL.

As to quaternary structure, interacts with the nucleotide free form of K-Ras (KRAS) via its LRR repeats. Interacts with AKT2, AKT3 and PRKCB isoform beta-II. Interacts with WDR48 and USP12. Requires Mn(2+) as cofactor. Mainly present in brain (at protein level). Isoform 2 is more abundant in adult brain neurons than isoform 1 in. Isoforms 1 and 2 are expressed in the retina but not found in rod outer segments.

The protein resides in the cytoplasm. The protein localises to the membrane. Its subcellular location is the cell membrane. It is found in the nucleus. It localises to the nucleoplasm. The protein resides in the nucleus membrane. The enzyme catalyses O-phospho-L-seryl-[protein] + H2O = L-seryl-[protein] + phosphate. It carries out the reaction O-phospho-L-threonyl-[protein] + H2O = L-threonyl-[protein] + phosphate. With respect to regulation, insensitive to okadaic acid. Deubiquitination by WDR48-USP12 complex positively regulates PHLPP1 stability. Functionally, protein phosphatase involved in regulation of Akt and PKC signaling. Mediates dephosphorylation in the C-terminal domain hydrophobic motif of members of the AGC Ser/Thr protein kinase family; specifically acts on 'Ser-473' of AKT2 and AKT3, 'Ser-660' of PRKCB and 'Ser-657' of PRKCA. Isoform 2 seems to have a major role in regulating Akt signaling in hippocampal neurons while isoform 1 may promote Akt and PKC activation and inhibit ERK signaling. Akt regulates the balance between cell survival and apoptosis through a cascade that primarily alters the function of transcription factors that regulate pro- and antiapoptotic genes. Dephosphorylation of 'Ser-473' of Akt triggers apoptosis and suppression of tumor growth. Dephosphorylation of PRKCA and PRKCB leads to their destabilization and degradation. Dephosphorylates STK4 on 'Thr-387' leading to STK4 activation and apoptosis. Dephosphorylates RPS6KB1 and is involved in regulation of cap-dependent translation. Inhibits cancer cell proliferation and may act as a tumor suppressor. Dephosphorylates RAF1 inhibiting its kinase activity. May act as a negative regulator of K-Ras signaling in membrane rafts. Involved in the hippocampus-dependent long-term memory formation. Involved in circadian control by regulating the consolidation of circadian periodicity after resetting. Involved in development and function of regulatory T-cells. The protein is PH domain leucine-rich repeat protein phosphatase 1 (Phlpp1) of Rattus norvegicus (Rat).